Consider the following 117-residue polypeptide: Putative iron-sulfur cluster insertion protein ErpA (117 aa).

Residues Cys45, Cys109, and Cys111 each contribute to the iron-sulfur cluster site.

The protein belongs to the HesB/IscA family. As to quaternary structure, homodimer. The cofactor is iron-sulfur cluster.

Functionally, required for insertion of 4Fe-4S clusters. This Chromobacterium violaceum (strain ATCC 12472 / DSM 30191 / JCM 1249 / CCUG 213 / NBRC 12614 / NCIMB 9131 / NCTC 9757 / MK) protein is Putative iron-sulfur cluster insertion protein ErpA.